The chain runs to 237 residues: tRNA (guanine-N(7)-)-methyltransferase (237 aa).

4 residues coordinate S-adenosyl-L-methionine: E68, E93, D120, and D143. Residue D143 is part of the active site. Substrate is bound by residues K147, D179, and 216–219 (TKFE).

It belongs to the class I-like SAM-binding methyltransferase superfamily. TrmB family.

The enzyme catalyses guanosine(46) in tRNA + S-adenosyl-L-methionine = N(7)-methylguanosine(46) in tRNA + S-adenosyl-L-homocysteine. It functions in the pathway tRNA modification; N(7)-methylguanine-tRNA biosynthesis. Catalyzes the formation of N(7)-methylguanine at position 46 (m7G46) in tRNA. The sequence is that of tRNA (guanine-N(7)-)-methyltransferase from Shewanella pealeana (strain ATCC 700345 / ANG-SQ1).